The chain runs to 172 residues: Type VI secretion system sheath protein TssB1 (172 aa).

As to quaternary structure, forms a heterodimer with TssC1. Heterodimers assemble to form the sheath of the T6SS machinery. Interacts with TagJ. Interacts with TssA1.

Functionally, core component of the H1 type VI (H1-T6SS) secretion system that plays a role in the release of toxins targeting both eukaryotic and prokaryotic species. Forms the sheath of the structure by assembling into tubules together with TssC1 resulting in the stacking of cogwheel-like structures showing predominantly a 12-fold symmetry. The sheath contracts to provide the energy needed for effector delivery. The protein is Type VI secretion system sheath protein TssB1 of Pseudomonas aeruginosa (strain ATCC 15692 / DSM 22644 / CIP 104116 / JCM 14847 / LMG 12228 / 1C / PRS 101 / PAO1).